The following is a 132-amino-acid chain: Fatty acid-binding protein type 2 (132 aa).

Ala-2 is modified (N-acetylalanine).

Belongs to the calycin superfamily. Fatty-acid binding protein (FABP) family.

This chain is Fatty acid-binding protein type 2, found in Fasciola hepatica (Liver fluke).